We begin with the raw amino-acid sequence, 1789 residues long: Protein sprint (1789 aa).

6 disordered regions span residues 53–120 (TTAN…AHPP), 140–190 (TTTA…DLAN), 218–237 (PLWN…HPTG), 261–317 (QRMH…QAGL), 329–378 (LNNN…DADD), and 401–460 (RRSR…PCDL). The segment covering 82–114 (SINNNKNNNISNKNNNNNNNNNNNINNNNNNNN) has biased composition (low complexity). Positions 140–149 (TTTANQLQQQ) are enriched in polar residues. Over residues 176 to 185 (PSEEDGDTDA) the composition is skewed to acidic residues. The segment covering 223-233 (RNGNGSTTTHC) has biased composition (polar residues). The span at 295–317 (NNNNINNNHNGQQSQKSQQQAGL) shows a compositional bias: low complexity. A compositionally biased stretch (polar residues) spans 337–361 (QPGSMTPASNRTGLDSNQNQKQNLN). The span at 409–418 (QSRTSLVSSS) shows a compositional bias: low complexity. Positions 428-445 (TSSEDDEEEPVEAEDEGE) are enriched in acidic residues. One can recognise an SH2 domain in the interval 473-566 (WFLPGIQRSG…ELPVQLMLPR (94 aa)). Disordered regions lie at residues 632 to 689 (FFSD…SGGQ), 744 to 787 (TAPE…SANG), 852 to 918 (GECK…ILES), 969 to 1006 (DLLA…QSLL), 1040 to 1067 (AAED…QGSP), 1094 to 1123 (RSQM…MLQP), and 1138 to 1160 (PKPK…KRAR). Residues 639–649 (KPPPTGAPPLP) show a composition bias toward pro residues. Over residues 671–686 (TPSDTTNSSLSSFTTS) the composition is skewed to low complexity. Residues 857 to 868 (TLSSQGSSSNDS) are compositionally biased toward polar residues. The span at 903–914 (AGKESQHYKESD) shows a compositional bias: basic and acidic residues. Low complexity predominate over residues 974–984 (TPSTPTPTQQS). Polar residues-rich tracts occupy residues 994-1006 (TATP…QSLL) and 1048-1065 (TTPT…SKQG). Positions 1143–1154 (SQQQQQSQQQQQ) are enriched in low complexity. The VPS9 domain maps to 1531-1673 (RSEDIQLLAQ…LKTFMASEGE (143 aa)). The Ras-associating domain maps to 1689-1777 (CSSVLRVIIP…CMLAYKRIDA (89 aa)).

Belongs to the RIN (Ras interaction/interference) family. In late cellular blastoderm embryos, it is expressed in the posterior end. Then, as development proceeds, it is expressed in the developing midgut, amnioserosa and in a specific subset of CNS neurons. Isoform 1 is expressed earlier in developing midgut and amnioserosa, but is not expressed in the CNS.

Functionally, potential Ras effector protein. May function as a guanine nucleotide exchange (GEF), by exchanging bound GDP for free GTP. This is Protein sprint (spri) from Drosophila melanogaster (Fruit fly).